A 1030-amino-acid polypeptide reads, in one-letter code: Teashirt homolog 2 (1030 aa).

The tract at residues 1-120 (MPRRKQQAPK…THPKLPSEPH (120 aa)) is disordered. Residues 11 to 42 (RAAGYAQEEVLKEEEEIKEEEEEEEDSGSVAQ) are a coiled coil. Acidic residues predominate over residues 21 to 37 (LKEEEEIKEEEEEEEDS). Composition is skewed to polar residues over residues 39-49 (SVAQHQSSNDT) and 66-95 (SCQN…QVSD). A compositionally biased stretch (basic and acidic residues) spans 103–120 (DVSDKKANTHPKLPSEPH). Lys189 participates in a covalent cross-link: Glycyl lysine isopeptide (Lys-Gly) (interchain with G-Cter in SUMO2). 2 C2H2-type zinc fingers span residues 216–240 (FRCR…ETGH) and 276–300 (LKCM…KTKH). Residues 240-266 (HYQDDNRKKDKLRPTSYSKPRKRAFQD) form a disordered region. Glycyl lysine isopeptide (Lys-Gly) (interchain with G-Cter in SUMO2) cross-links involve residues Lys307 and Lys316. A disordered region spans residues 328-348 (VNRPCSPDSTTGSLADSFSSQ). Over residues 334 to 348 (PDSTTGSLADSFSSQ) the composition is skewed to polar residues. The segment at 381–405 (LKCMECGSSHDTLQQLTTHMMVTGH) adopts a C2H2-type 3; atypical zinc-finger fold. Lys418 participates in a covalent cross-link: Glycyl lysine isopeptide (Lys-Gly) (interchain with G-Cter in SUMO2). Residues 432 to 459 (SLSETPNSESLAPKPSSNSPSECTASTT) are compositionally biased toward polar residues. The disordered stretch occupies residues 432 to 488 (SLSETPNSESLAPKPSSNSPSECTASTTELKKESKKEKGEGIEDEQGVKSEDYEDSL). Positions 460–482 (ELKKESKKEKGEGIEDEQGVKSE) are enriched in basic and acidic residues. Residues Lys462, Lys480, Lys497, and Lys601 each participate in a glycyl lysine isopeptide (Lys-Gly) (interchain with G-Cter in SUMO2) cross-link. Composition is skewed to basic and acidic residues over residues 608 to 623 (DEVV…HEEA) and 633 to 664 (SFSK…KPEP). Disordered regions lie at residues 608 to 687 (DEVV…LPSI), 703 to 726 (KATE…VFHK), and 759 to 784 (QPID…SPPQ). Lys652 is covalently cross-linked (Glycyl lysine isopeptide (Lys-Gly) (interchain with G-Cter in SUMO2)). Residues 710–722 (SPSCSSPNSSTSP) are compositionally biased toward low complexity. A compositionally biased stretch (polar residues) spans 773-783 (SSQAQSCTSPP). Glycyl lysine isopeptide (Lys-Gly) (interchain with G-Cter in SUMO2) cross-links involve residues Lys796 and Lys816. The segment at residues 837 to 907 (RKGRQSNWNP…NVKYQLRKTG (71 aa)) is a DNA-binding region (homeobox). The C2H2-type 4 zinc finger occupies 922-944 (FYCSDCASQFRTPSTYISHLESH). Residue Lys962 forms a Glycyl lysine isopeptide (Lys-Gly) (interchain with G-Cter in SUMO2) linkage. 2 disordered regions span residues 965-987 (QEIS…EDTD) and 1009-1030 (LSKT…VDEE). Residues 968–977 (SRVSSAQRSP) are compositionally biased toward polar residues. At Ser976 the chain carries Phosphoserine. The C2H2-type 5 zinc-finger motif lies at 990-1013 (FKCKLCRRTFVSKHAVKLHLSKTH).

The protein belongs to the teashirt C2H2-type zinc-finger protein family. As to quaternary structure, interacts (via homeobox domain) with APBB1 (via PID domain 1). Sumoylated.

It localises to the nucleus. In terms of biological role, probable transcriptional regulator involved in developmental processes. May act as a transcriptional repressor (Potential). This chain is Teashirt homolog 2 (Tshz2), found in Mus musculus (Mouse).